Consider the following 91-residue polypeptide: MKVQILFALMMVLVTLCLGQKMQRGVIEDVCNNCETNCQLIKDYYGRSFCQDSLCQDSYRFCTNLEFTMDKCKDENSNTHAGCVTALLSTS.

The N-terminal stretch at 1–21 (MKVQILFALMMVLVTLCLGQK) is a signal peptide. Positions 22–24 (MQR) are excised as a propeptide.

Belongs to the teretoxin C (TC) superfamily. Post-translationally, contains 4 disulfide bonds. As to expression, expressed by the venom duct.

The protein resides in the secreted. The sequence is that of Teretoxin Tan22.13 from Terebra anilis (Auger snail).